The primary structure comprises 226 residues: Thiamine-phosphate synthase (226 aa).

Residues 46-50 (QFRDK) and aspartate 83 contribute to the 4-amino-2-methyl-5-(diphosphooxymethyl)pyrimidine site. The Mg(2+) site is built by aspartate 84 and aspartate 103. A 4-amino-2-methyl-5-(diphosphooxymethyl)pyrimidine-binding site is contributed by serine 122. Position 149-151 (149-151 (TQS)) interacts with 2-[(2R,5Z)-2-carboxy-4-methylthiazol-5(2H)-ylidene]ethyl phosphate. Lysine 152 provides a ligand contact to 4-amino-2-methyl-5-(diphosphooxymethyl)pyrimidine. 2-[(2R,5Z)-2-carboxy-4-methylthiazol-5(2H)-ylidene]ethyl phosphate-binding positions include glycine 181 and 201 to 202 (IT).

Belongs to the thiamine-phosphate synthase family. Mg(2+) serves as cofactor.

It catalyses the reaction 2-[(2R,5Z)-2-carboxy-4-methylthiazol-5(2H)-ylidene]ethyl phosphate + 4-amino-2-methyl-5-(diphosphooxymethyl)pyrimidine + 2 H(+) = thiamine phosphate + CO2 + diphosphate. The enzyme catalyses 2-(2-carboxy-4-methylthiazol-5-yl)ethyl phosphate + 4-amino-2-methyl-5-(diphosphooxymethyl)pyrimidine + 2 H(+) = thiamine phosphate + CO2 + diphosphate. It carries out the reaction 4-methyl-5-(2-phosphooxyethyl)-thiazole + 4-amino-2-methyl-5-(diphosphooxymethyl)pyrimidine + H(+) = thiamine phosphate + diphosphate. The protein operates within cofactor biosynthesis; thiamine diphosphate biosynthesis; thiamine phosphate from 4-amino-2-methyl-5-diphosphomethylpyrimidine and 4-methyl-5-(2-phosphoethyl)-thiazole: step 1/1. Functionally, condenses 4-methyl-5-(beta-hydroxyethyl)thiazole monophosphate (THZ-P) and 2-methyl-4-amino-5-hydroxymethyl pyrimidine pyrophosphate (HMP-PP) to form thiamine monophosphate (TMP). The chain is Thiamine-phosphate synthase from Haemophilus influenzae (strain PittGG).